Here is a 376-residue protein sequence, read N- to C-terminus: Pulmonary surfactant-associated protein B (376 aa).

An N-terminal signal peptide occupies residues 1 to 24; it reads MAKLHLQWLLLLPTLCSLGAATES. The 39-residue stretch at 25-63 folds into the Saposin A-type domain; sequence ASSPDCAQGPKFWCQSLEQAIQCRALGHCLQEVWGHAGA. Residues 25–190 constitute a propeptide that is removed on maturation; it reads ASSPDCAQGP…PHTQDLSEQQ (166 aa). Saposin B-type domains follow at residues 63-145, 194-271, and 290-365; these read ANDL…PLGQ, PLPF…STAD, and QDTE…EAPA. 9 disulfides stabilise this stretch: Cys67-Cys141, Cys70-Cys135, Cys98-Cys110, Cys198-Cys267, Cys201-Cys261, Cys225-Cys236, Cys294-Cys361, Cys297-Cys355, and Cys320-Cys330. Positions 270 to 376 are excised as a propeptide; sequence ADAIGPALPA…PLQCFQTPHL (107 aa). N-linked (GlcNAc...) asparagine glycosylation occurs at Asn306.

Homodimer; disulfide-linked.

Its subcellular location is the secreted. It is found in the extracellular space. It localises to the surface film. Pulmonary surfactant-associated proteins promote alveolar stability by lowering the surface tension at the air-liquid interface in the peripheral air spaces. SP-B increases the collapse pressure of palmitic acid to nearly 70 millinewtons per meter. The protein is Pulmonary surfactant-associated protein B (Sftpb) of Rattus norvegicus (Rat).